The chain runs to 174 residues: Gamma-crystallin A (174 aa).

Beta/gamma crystallin 'Greek key' domains are found at residues 2 to 40 (GKITFYEDRGFQGRCYECSSDCPNLQTYFSRCNSIRVDS) and 41 to 83 (GCWM…RSIP). Residues 84–87 (YTSS) form a connecting peptide region. 2 consecutive Beta/gamma crystallin 'Greek key' domains span residues 88-128 (HRIR…HVLE) and 129-171 (GCWV…RRVM).

The protein belongs to the beta/gamma-crystallin family.

Functionally, crystallins are the dominant structural components of the vertebrate eye lens. The chain is Gamma-crystallin A (Cryga) from Mus musculus (Mouse).